The chain runs to 116 residues: Proline-rich protein 9 (116 aa).

The protein is Proline-rich protein 9 (PRR9) of Homo sapiens (Human).